The primary structure comprises 511 residues: ATP synthase subunit alpha (511 aa).

169–176 (GDRQTGKT) is an ATP binding site.

The protein belongs to the ATPase alpha/beta chains family. In terms of assembly, F-type ATPases have 2 components, CF(1) - the catalytic core - and CF(0) - the membrane proton channel. CF(1) has five subunits: alpha(3), beta(3), gamma(1), delta(1), epsilon(1). CF(0) has three main subunits: a(1), b(2) and c(9-12). The alpha and beta chains form an alternating ring which encloses part of the gamma chain. CF(1) is attached to CF(0) by a central stalk formed by the gamma and epsilon chains, while a peripheral stalk is formed by the delta and b chains.

The protein resides in the cell inner membrane. It carries out the reaction ATP + H2O + 4 H(+)(in) = ADP + phosphate + 5 H(+)(out). Its function is as follows. Produces ATP from ADP in the presence of a proton gradient across the membrane. The alpha chain is a regulatory subunit. This is ATP synthase subunit alpha from Bartonella quintana (strain Toulouse) (Rochalimaea quintana).